We begin with the raw amino-acid sequence, 272 residues long: Cell division protein FtsQ (272 aa).

The Cytoplasmic segment spans residues 1–43 (MEYNPPNTRERIAARRQRLRQPSSEPAIPGWRRRFIDGLQSGR). The helical transmembrane segment at 44-64 (IVSGAVFVVSCLALFYVLFSS) threads the bilayer. The Extracellular segment spans residues 65-272 (QFRVQTVEVV…FYQNRTDGRS (208 aa)). Positions 66 to 133 (FRVQTVEVVG…DRARIVIVER (68 aa)) constitute a POTRA domain.

The protein belongs to the FtsQ/DivIB family. FtsQ subfamily.

It localises to the cell membrane. Functionally, essential cell division protein. The protein is Cell division protein FtsQ of Chloroflexus aggregans (strain MD-66 / DSM 9485).